We begin with the raw amino-acid sequence, 396 residues long: Fumarate--(S)-2,3-diaminopropanoate ligase (396 aa).

The enzyme catalyses (S)-2,3-diaminopropanoate + fumarate + ATP = N(3)-fumaroyl-(S)-2,3-diaminopropanoate + AMP + diphosphate. It functions in the pathway antibiotic biosynthesis. Its function is as follows. Involved in dapdiamide antibiotics biosynthesis. Ligates fumarate and 2,3-diaminopropionate (DAP) to form N-beta-fumaroyl-DAP. Can also form N-succinoyl-DAP from succinate and DAP, with lower efficiency. The chain is Fumarate--(S)-2,3-diaminopropanoate ligase from Enterobacter agglomerans (Erwinia herbicola).